Reading from the N-terminus, the 298-residue chain is GTP cyclohydrolase FolE2 (298 aa).

The protein belongs to the GTP cyclohydrolase IV family.

The enzyme catalyses GTP + H2O = 7,8-dihydroneopterin 3'-triphosphate + formate + H(+). The protein operates within cofactor biosynthesis; 7,8-dihydroneopterin triphosphate biosynthesis; 7,8-dihydroneopterin triphosphate from GTP: step 1/1. In terms of biological role, converts GTP to 7,8-dihydroneopterin triphosphate. This Xylella fastidiosa (strain M23) protein is GTP cyclohydrolase FolE2.